We begin with the raw amino-acid sequence, 400 residues long: Trans-enoyl reductase ucsL (400 aa).

Residue 50 to 53 participates in NADP(+) binding; sequence TDHK. Residue 145–152 participates in substrate binding; the sequence is SVHGSVAL. NADP(+) is bound by residues 204-207, 227-230, Tyr-245, and 292-293; these read STAC, SPRN, and LE. 313–317 contacts substrate; sequence GPVMF. 389–390 is a binding site for NADP(+); that stretch reads VS.

It belongs to the zinc-containing alcohol dehydrogenase family. Monomer.

It functions in the pathway mycotoxin biosynthesis. Its function is as follows. Trans-enoyl reductase; part of the gene cluster that mediates the biosynthesis of UCS1025A, a member of the pyrrolizidinone family that acts as a strong telomerase inhibitor and displays potent antibacterial and antitumor properties. These compounds share a hemiaminal-containing pyrrolizidinone core fused with a gamma-lactone, giving a furopyrrolizidine that is connected to a decalin fragment. The polyketide synthase module (PKS) of the PKS-NRPS ucsA is responsible for the synthesis of the polyketide backbone via the condensation of an acetyl-CoA starter unit with 6 malonyl-CoA units. The downstream nonribosomal peptide synthetase (NRPS) module then amidates the carboxyl end of the polyketide with a 2S,3S-methylproline derived from L-isoleucine by the 2-oxoglutarate-dependent dioxygenase ucsF which converts L-isoleucine to (4S,5S)-4-methylpyrroline-5-carboxylate that is further converted to 2S,3S-methylproline by the pyrroline-5-carboxylate reductase ucsG. Reductive release of the completed aminoacyl polyketide from the assembly line can form the 3-pyrrolin-2-one structure via an intramolecular Knoevenagel reaction. Because ucsA lacks a designated enoylreductase (ER) domain, the required activity is provided the enoyl reductase ucsL. This keto acyclic precursor is the substrate of the Diels-Alderase ucsH, that catalyzes the Diels-Alder cycloaddition. Oxidation of the 3S-methyl group to a carboxylate by the cytochrome P450 monooxygenase ucsK allows an oxa-Michael cyclization that might involve the reductase/dehydrogenase ucsI and which furnishes the furopyrrolizidine. The oxidase ucsJ likely plays a critical role in stereoselective reduction of the C5-C6 double bond to afford the required R-configured carboxylate group. Further enolization and oxidation at C5 by an unidentified enzyme affords the last intermediate that can undergo oxa-Michael cyclization to yield UCS1025A. In Acremonium sp, this protein is Trans-enoyl reductase ucsL.